The following is a 177-amino-acid chain: uncharacterized protein (177 aa).

This is an uncharacterized protein from Treponema pallidum (strain Nichols).